A 414-amino-acid polypeptide reads, in one-letter code: Sec-independent protein translocase protein TatC (414 aa).

The segment at 1 to 21 is disordered; that stretch reads MTQSTSVSKGGRVSRKAKKNP. 6 helical membrane passes run 45–65, 119–139, 157–177, 200–220, 238–258, and 259–279; these read IAVT…AWAI, GGLA…WRFI, IAGF…PMGL, FVIA…FTAM, IMIV…DPIS, and MLVL…FTRI. The tract at residues 315–414 is disordered; sequence IYDGDHKGIA…IQSSSFDDVL (100 aa). The span at 323 to 336 shows a compositional bias: gly residues; that stretch reads IAGGGDAHPAGGSG. The segment covering 345 to 357 has biased composition (low complexity); the sequence is TAPTRAPSASESP. A compositionally biased stretch (polar residues) spans 403 to 414; sequence DTIQSSSFDDVL.

This sequence belongs to the TatC family. As to quaternary structure, the Tat system comprises two distinct complexes: a TatABC complex, containing multiple copies of TatA, TatB and TatC subunits, and a separate TatA complex, containing only TatA subunits. Substrates initially bind to the TatABC complex, which probably triggers association of the separate TatA complex to form the active translocon.

The protein localises to the cell membrane. Functionally, part of the twin-arginine translocation (Tat) system that transports large folded proteins containing a characteristic twin-arginine motif in their signal peptide across membranes. Together with TatB, TatC is part of a receptor directly interacting with Tat signal peptides. The chain is Sec-independent protein translocase protein TatC from Corynebacterium kroppenstedtii (strain DSM 44385 / JCM 11950 / CIP 105744 / CCUG 35717).